The primary structure comprises 233 residues: Leucyl/phenylalanyl-tRNA--protein transferase (233 aa).

This sequence belongs to the L/F-transferase family.

The protein localises to the cytoplasm. The enzyme catalyses N-terminal L-lysyl-[protein] + L-leucyl-tRNA(Leu) = N-terminal L-leucyl-L-lysyl-[protein] + tRNA(Leu) + H(+). It catalyses the reaction N-terminal L-arginyl-[protein] + L-leucyl-tRNA(Leu) = N-terminal L-leucyl-L-arginyl-[protein] + tRNA(Leu) + H(+). The catalysed reaction is L-phenylalanyl-tRNA(Phe) + an N-terminal L-alpha-aminoacyl-[protein] = an N-terminal L-phenylalanyl-L-alpha-aminoacyl-[protein] + tRNA(Phe). Its function is as follows. Functions in the N-end rule pathway of protein degradation where it conjugates Leu, Phe and, less efficiently, Met from aminoacyl-tRNAs to the N-termini of proteins containing an N-terminal arginine or lysine. The polypeptide is Leucyl/phenylalanyl-tRNA--protein transferase (Chromobacterium violaceum (strain ATCC 12472 / DSM 30191 / JCM 1249 / CCUG 213 / NBRC 12614 / NCIMB 9131 / NCTC 9757 / MK)).